We begin with the raw amino-acid sequence, 596 residues long: Elongation factor 4 (596 aa).

Residues 2–183 (KNIRNFSIIA…AIVRRVPAPD (182 aa)) enclose the tr-type G domain. Residues 14 to 19 (DHGKST) and 130 to 133 (NKID) each bind GTP.

The protein belongs to the TRAFAC class translation factor GTPase superfamily. Classic translation factor GTPase family. LepA subfamily.

It localises to the cell inner membrane. It carries out the reaction GTP + H2O = GDP + phosphate + H(+). In terms of biological role, required for accurate and efficient protein synthesis under certain stress conditions. May act as a fidelity factor of the translation reaction, by catalyzing a one-codon backward translocation of tRNAs on improperly translocated ribosomes. Back-translocation proceeds from a post-translocation (POST) complex to a pre-translocation (PRE) complex, thus giving elongation factor G a second chance to translocate the tRNAs correctly. Binds to ribosomes in a GTP-dependent manner. The protein is Elongation factor 4 of Campylobacter curvus (strain 525.92).